We begin with the raw amino-acid sequence, 1377 residues long: Hemoglobin-binding protease hbp autotransporter (1377 aa).

The first 52 residues, 1 to 52, serve as a signal peptide directing secretion; the sequence is MNRIYSLRYSAVARGFIAVSEFARKCVHKSVRRLCFPVLLLIPVLFSAGSLA. The Peptidase S6 domain maps to 53–302; the sequence is GTVNNELGYQ…AVIPLDFIGQ (250 aa). Active-site charge relay system residues include histidine 125, aspartate 153, and serine 259. Residues 1111–1377 form the Autotransporter domain; the sequence is DINGEAGTWV…AINANIRYSF (267 aa).

Post-translationally, cleaved to release the mature protein from the outer membrane.

The protein localises to the periplasm. It is found in the secreted. The protein resides in the cell surface. Its subcellular location is the cell outer membrane. Its activity is regulated as follows. Protease activity is inhibited by 3,4-dichloroisocoumarin. Interacts with hemoglobin, degrades it and subsequently binds the released heme. Could make heme accessible not only for E.coli, but also for B.fragilis during mixed intra-abdominal infections. Has a role in abscess formation. This is Hemoglobin-binding protease hbp autotransporter (hbp) from Escherichia coli.